The chain runs to 227 residues: Prolactin-5A1 (227 aa).

The signal sequence occupies residues 1 to 27 (MQIQPHPSGALLLLLLSNLLMWENVAS). A glycan (N-linked (GlcNAc...) asparagine) is linked at asparagine 47. The cysteines at positions 85 and 204 are disulfide-linked.

It belongs to the somatotropin/prolactin family. In terms of tissue distribution, expressed specifically in placenta. Highly expressed in invasive trophoblast cells lining the central placental vessel.

The protein localises to the secreted. This chain is Prolactin-5A1 (Prl5a1), found in Rattus norvegicus (Rat).